A 196-amino-acid polypeptide reads, in one-letter code: Protein LURP-one-related 8 (196 aa).

It belongs to the LOR family.

Functionally, might be related to the phospholipid scramblase and tubby-like superfamily of membrane tethered transcription factors. The chain is Protein LURP-one-related 8 from Arabidopsis thaliana (Mouse-ear cress).